The primary structure comprises 434 residues: Gamma-glutamyl phosphate reductase (434 aa).

The protein belongs to the gamma-glutamyl phosphate reductase family.

The protein localises to the cytoplasm. It catalyses the reaction L-glutamate 5-semialdehyde + phosphate + NADP(+) = L-glutamyl 5-phosphate + NADPH + H(+). Its pathway is amino-acid biosynthesis; L-proline biosynthesis; L-glutamate 5-semialdehyde from L-glutamate: step 2/2. Its function is as follows. Catalyzes the NADPH-dependent reduction of L-glutamate 5-phosphate into L-glutamate 5-semialdehyde and phosphate. The product spontaneously undergoes cyclization to form 1-pyrroline-5-carboxylate. This chain is Gamma-glutamyl phosphate reductase, found in Trichormus variabilis (strain ATCC 29413 / PCC 7937) (Anabaena variabilis).